Here is a 392-residue protein sequence, read N- to C-terminus: Queuine tRNA-ribosyltransferase (392 aa).

The active-site Proton acceptor is aspartate 93. Substrate is bound by residues 93–97, aspartate 147, glutamine 189, and glycine 216; that span reads DSGGY. Positions 247-253 are RNA binding; it reads GVGAPED. The active-site Nucleophile is the aspartate 266. Residues 271–275 are RNA binding; important for wobble base 34 recognition; that stretch reads TRVAR. Zn(2+)-binding residues include cysteine 304, cysteine 306, cysteine 309, and histidine 335.

The protein belongs to the queuine tRNA-ribosyltransferase family. As to quaternary structure, homodimer. Within each dimer, one monomer is responsible for RNA recognition and catalysis, while the other monomer binds to the replacement base PreQ1. The cofactor is Zn(2+).

The enzyme catalyses 7-aminomethyl-7-carbaguanine + guanosine(34) in tRNA = 7-aminomethyl-7-carbaguanosine(34) in tRNA + guanine. Its pathway is tRNA modification; tRNA-queuosine biosynthesis. In terms of biological role, catalyzes the base-exchange of a guanine (G) residue with the queuine precursor 7-aminomethyl-7-deazaguanine (PreQ1) at position 34 (anticodon wobble position) in tRNAs with GU(N) anticodons (tRNA-Asp, -Asn, -His and -Tyr). Catalysis occurs through a double-displacement mechanism. The nucleophile active site attacks the C1' of nucleotide 34 to detach the guanine base from the RNA, forming a covalent enzyme-RNA intermediate. The proton acceptor active site deprotonates the incoming PreQ1, allowing a nucleophilic attack on the C1' of the ribose to form the product. After dissociation, two additional enzymatic reactions on the tRNA convert PreQ1 to queuine (Q), resulting in the hypermodified nucleoside queuosine (7-(((4,5-cis-dihydroxy-2-cyclopenten-1-yl)amino)methyl)-7-deazaguanosine). The polypeptide is Queuine tRNA-ribosyltransferase (Dehalococcoides mccartyi (strain ATCC BAA-2266 / KCTC 15142 / 195) (Dehalococcoides ethenogenes (strain 195))).